Here is a 171-residue protein sequence, read N- to C-terminus: NADH-quinone oxidoreductase subunit B 1 (171 aa).

[4Fe-4S] cluster is bound by residues Cys-44, Cys-45, Cys-110, and Cys-139.

It belongs to the complex I 20 kDa subunit family. NDH-1 is composed of 14 different subunits. Subunits NuoB, C, D, E, F, and G constitute the peripheral sector of the complex. The cofactor is [4Fe-4S] cluster.

It localises to the cell inner membrane. The catalysed reaction is a quinone + NADH + 5 H(+)(in) = a quinol + NAD(+) + 4 H(+)(out). Its function is as follows. NDH-1 shuttles electrons from NADH, via FMN and iron-sulfur (Fe-S) centers, to quinones in the respiratory chain. The immediate electron acceptor for the enzyme in this species is believed to be ubiquinone. Couples the redox reaction to proton translocation (for every two electrons transferred, four hydrogen ions are translocated across the cytoplasmic membrane), and thus conserves the redox energy in a proton gradient. The protein is NADH-quinone oxidoreductase subunit B 1 of Opitutus terrae (strain DSM 11246 / JCM 15787 / PB90-1).